We begin with the raw amino-acid sequence, 318 residues long: COP9 signalosome complex subunit 6 (318 aa).

The MPN domain occupies 32-165; the sequence is VALHPLVILN…VSVYESVIDI (134 aa).

Belongs to the peptidase M67A family. CSN6 subfamily. In terms of assembly, component of the CSN complex, probably composed of cops1, cops2, cops3, cops4, cops5, cops6, cops7, cops8 and cops9.

The protein resides in the cytoplasm. The protein localises to the nucleus. Component of the COP9 signalosome complex (CSN), a complex involved in various cellular and developmental processes. The CSN complex is an essential regulator of the ubiquitin (Ubl) conjugation pathway by mediating the deneddylation of the cullin subunits of E3 ligase complexes, leading to modify the Ubl ligase activity. The polypeptide is COP9 signalosome complex subunit 6 (cops6) (Xenopus laevis (African clawed frog)).